The sequence spans 144 residues: MKSARRRSRELATQGLYQWLLSGSPGGEIDAQLRGAQGFDKADHEHLDAVLHGVIRDSEALSAAIAPCLDRPIEQLSPVERAVLLVAAFELKNHLDIPYRVVINEAVELAKTFGGADGYKYVNGVLDKLSAQLREDETQAARKR.

This sequence belongs to the NusB family.

Its function is as follows. Involved in transcription antitermination. Required for transcription of ribosomal RNA (rRNA) genes. Binds specifically to the boxA antiterminator sequence of the ribosomal RNA (rrn) operons. The protein is Transcription antitermination protein NusB of Paraburkholderia xenovorans (strain LB400).